The sequence spans 343 residues: Twinfilin (343 aa).

ADF-H domains follow at residues 4–139 (QTGI…KHKV) and 177–312 (GINC…EELH). The segment at 314 to 343 (RKLNLRPQFSKPKGPPSRGAKRLTKPQAVE) is disordered.

This sequence belongs to the actin-binding proteins ADF family. Twinfilin subfamily. As to quaternary structure, interacts with G-actin; ADP-actin form.

It localises to the cytoplasm. The protein localises to the cytoskeleton. It is found in the cell cortex. In terms of biological role, actin-binding protein involved in motile and morphological processes. Inhibits actin polymerization, likely by sequestering G-actin. This Anopheles gambiae (African malaria mosquito) protein is Twinfilin (twf).